Consider the following 247-residue polypeptide: Membrane-spanning 4-domains subfamily A member 6D (247 aa).

Topologically, residues 1–46 (MIPQVVTSETVTVISPNGISFPQTDKPQPSHQSQDSLKKHLKAEIK) are cytoplasmic. The helical transmembrane segment at 47-67 (VMAAIQIMCAVMVLSLGIILA) threads the bilayer. Topologically, residues 68 to 80 (SVPSNLHFTSVFS) are extracellular. The helical transmembrane segment at 81–101 (ILLESGYPFVGALFFAISGIL) threads the bilayer. Residues 102–121 (SIVTEKKMTKPLVHSSLALS) lie on the Cytoplasmic side of the membrane. A helical membrane pass occupies residues 122 to 142 (ILSVLSALTGIAILSVSLAAL). Over 143 to 180 (EPALQQCKLAFTQLDTTQDAYHFFSPEPLNSCFVAKAA) the chain is Extracellular. Residues 181 to 201 (LTGVFSLMLISSVLELGLAVL) form a helical membrane-spanning segment. Residues 202–247 (TATLWWKQSSSAFSGNVIFLSQNSKNKSSVSSESLCNPTYENILTS) are Cytoplasmic-facing. The residue at position 235 (Ser235) is a Phosphoserine.

Belongs to the MS4A family. In terms of tissue distribution, expressed in thymus, spleen, intestine, colon, testis, heart, liver, brain, kidney, peripheral lymph node and bone marrow.

The protein localises to the membrane. May be involved in signal transduction as a component of a multimeric receptor complex. The sequence is that of Membrane-spanning 4-domains subfamily A member 6D (Ms4a6d) from Mus musculus (Mouse).